Reading from the N-terminus, the 539-residue chain is Tyrosinase (539 aa).

Residues H63, H84, H93, H290, H294, and H333 each contribute to the Cu cation site. The segment at residues 82–84 (CHH) is a cross-link (2'-(S-cysteinyl)-histidine (Cys-His)).

Belongs to the tyrosinase family. Homotetramer. It depends on Cu(2+) as a cofactor. In terms of processing, the N-terminus is blocked.

It catalyses the reaction 2 L-dopa + O2 = 2 L-dopaquinone + 2 H2O. It carries out the reaction L-tyrosine + O2 = L-dopaquinone + H2O. With respect to regulation, activated by acidifying treatment at pH 3.0. Its function is as follows. This is a copper-containing oxidase that functions in the formation of pigments such as melanins and other polyphenolic compounds. This Aspergillus oryzae (strain ATCC 42149 / RIB 40) (Yellow koji mold) protein is Tyrosinase (melO).